Reading from the N-terminus, the 313-residue chain is Adhesin MafA 2 (313 aa).

Residues 1–14 (MKTLLLLIPLVLTA) form the signal peptide. Cys15 carries the N-palmitoyl cysteine lipid modification. The S-diacylglycerol cysteine moiety is linked to residue Cys15. A compositionally biased stretch (polar residues) spans 282 to 297 (GDTTAQNRPDFKQNNG). Residues 282 to 313 (GDTTAQNRPDFKQNNGKKPDVGNEVIRRRKGG) are disordered.

This sequence belongs to the MafA family.

The protein localises to the cell outer membrane. The polypeptide is Adhesin MafA 2 (mafA2) (Neisseria meningitidis serogroup A / serotype 4A (strain DSM 15465 / Z2491)).